The chain runs to 302 residues: 4-hydroxy-tetrahydrodipicolinate synthase (302 aa).

Thr-50 contacts pyruvate. The Proton donor/acceptor role is filled by Tyr-138. Lys-167 (schiff-base intermediate with substrate) is an active-site residue. Val-209 contributes to the pyruvate binding site.

The protein belongs to the DapA family. As to quaternary structure, homotetramer; dimer of dimers.

It localises to the cytoplasm. It carries out the reaction L-aspartate 4-semialdehyde + pyruvate = (2S,4S)-4-hydroxy-2,3,4,5-tetrahydrodipicolinate + H2O + H(+). The protein operates within amino-acid biosynthesis; L-lysine biosynthesis via DAP pathway; (S)-tetrahydrodipicolinate from L-aspartate: step 3/4. In terms of biological role, catalyzes the condensation of (S)-aspartate-beta-semialdehyde [(S)-ASA] and pyruvate to 4-hydroxy-tetrahydrodipicolinate (HTPA). The protein is 4-hydroxy-tetrahydrodipicolinate synthase of Salinibacter ruber (strain DSM 13855 / M31).